A 425-amino-acid chain; its full sequence is Dihydroorotase (425 aa).

Positions 59 and 61 each coordinate Zn(2+). Substrate is bound by residues 61-63 (HLR) and N93. Zn(2+) contacts are provided by D151, H178, and H231. N277 provides a ligand contact to substrate. Position 304 (D304) interacts with Zn(2+). D304 is a catalytic residue. Substrate-binding positions include H308 and 322-323 (FG).

The protein belongs to the metallo-dependent hydrolases superfamily. DHOase family. Class I DHOase subfamily. The cofactor is Zn(2+).

It carries out the reaction (S)-dihydroorotate + H2O = N-carbamoyl-L-aspartate + H(+). It functions in the pathway pyrimidine metabolism; UMP biosynthesis via de novo pathway; (S)-dihydroorotate from bicarbonate: step 3/3. Its function is as follows. Catalyzes the reversible cyclization of carbamoyl aspartate to dihydroorotate. The chain is Dihydroorotase from Staphylococcus epidermidis (strain ATCC 35984 / DSM 28319 / BCRC 17069 / CCUG 31568 / BM 3577 / RP62A).